A 114-amino-acid chain; its full sequence is Iron-sulfur cluster insertion protein ErpA (114 aa).

Residues C42, C106, and C108 each coordinate iron-sulfur cluster.

This sequence belongs to the HesB/IscA family. Homodimer. The cofactor is iron-sulfur cluster.

In terms of biological role, required for insertion of 4Fe-4S clusters for at least IspG. The polypeptide is Iron-sulfur cluster insertion protein ErpA (Serratia proteamaculans (strain 568)).